The sequence spans 474 residues: tRNA-2-methylthio-N(6)-dimethylallyladenosine synthase (474 aa).

The region spanning 3–120 is the MTTase N-terminal domain; the sequence is KKLHIKTWGC…LPEMINHVQG (118 aa). [4Fe-4S] cluster contacts are provided by Cys12, Cys49, Cys83, Cys157, Cys161, and Cys164. Residues 143-375 form the Radical SAM core domain; the sequence is RAEGPTAFVS…QQRISQQAME (233 aa). Positions 378–441 constitute a TRAM domain; it reads RKMVGTVQRV…ASSLRGILLR (64 aa).

Belongs to the methylthiotransferase family. MiaB subfamily. As to quaternary structure, monomer. The cofactor is [4Fe-4S] cluster.

It localises to the cytoplasm. The enzyme catalyses N(6)-dimethylallyladenosine(37) in tRNA + (sulfur carrier)-SH + AH2 + 2 S-adenosyl-L-methionine = 2-methylsulfanyl-N(6)-dimethylallyladenosine(37) in tRNA + (sulfur carrier)-H + 5'-deoxyadenosine + L-methionine + A + S-adenosyl-L-homocysteine + 2 H(+). Catalyzes the methylthiolation of N6-(dimethylallyl)adenosine (i(6)A), leading to the formation of 2-methylthio-N6-(dimethylallyl)adenosine (ms(2)i(6)A) at position 37 in tRNAs that read codons beginning with uridine. This Yersinia pestis bv. Antiqua (strain Antiqua) protein is tRNA-2-methylthio-N(6)-dimethylallyladenosine synthase.